The sequence spans 258 residues: Probable enoyl-CoA hydratase (258 aa).

Belongs to the enoyl-CoA hydratase/isomerase family.

It carries out the reaction a (3S)-3-hydroxyacyl-CoA = a (2E)-enoyl-CoA + H2O. The catalysed reaction is a 4-saturated-(3S)-3-hydroxyacyl-CoA = a (3E)-enoyl-CoA + H2O. Its pathway is lipid metabolism; fatty acid beta-oxidation. In terms of biological role, involved in the degradation of long-chain fatty acids. The polypeptide is Probable enoyl-CoA hydratase (fadB) (Bacillus subtilis (strain 168)).